The primary structure comprises 458 residues: Sensor histidine kinase ZraS (458 aa).

The Cytoplasmic portion of the chain corresponds to 1–14 (MRFMQRSKDSLAKW). Residues 15-35 (LSAILPVVIVGLVGLFAVTVI) form a helical membrane-spanning segment. At 36-194 (RDYGRETAAA…SAEDREQRNT (159 aa)) the chain is on the periplasmic side. Residues 195–215 (LIILFALATVLLASVLSFFWY) form a helical membrane-spanning segment. Residues 216-458 (RRYLRSRQLL…VNITRKDPQG (243 aa)) lie on the Cytoplasmic side of the membrane. The region spanning 244-451 (GVAHEIRNPL…RFTLWLPVNI (208 aa)) is the Histidine kinase domain. His247 carries the phosphohistidine; by autocatalysis modification.

Autophosphorylated.

It localises to the cell inner membrane. The enzyme catalyses ATP + protein L-histidine = ADP + protein N-phospho-L-histidine.. Activity of the ZraS/ZraR two-component system is repressed by the zinc-bound form of ZraP, which probably interacts with the periplasmic region of ZraS. Its function is as follows. Part of the Zra signaling pathway, an envelope stress response (ESR) system composed of the periplasmic accessory protein ZraP, the histidine kinase ZraS and the transcriptional regulator ZraR. The ZraPSR system contributes to antibiotic resistance and is important for membrane integrity in the presence of membrane-targeting biocides. ZraS is a member of the two-component regulatory system ZraS/ZraR. Functions as a membrane-associated sensor kinase that phosphorylates ZraR in response to high concentrations of Zn(2+) or Pb(2+) in the medium. The protein is Sensor histidine kinase ZraS (zraS) of Escherichia coli O157:H7.